A 197-amino-acid chain; its full sequence is Phosphoheptose isomerase (197 aa).

In terms of domain architecture, SIS spans 36-197 (MVNALLNEGK…IDSQLFGSEE (162 aa)). 51-53 (NGG) serves as a coordination point for substrate. Zn(2+) is bound by residues His-60 and Glu-64. Substrate contacts are provided by residues Glu-64, 93-94 (ND), 119-121 (STS), Ser-124, and Gln-174. Positions 174 and 182 each coordinate Zn(2+).

This sequence belongs to the SIS family. GmhA subfamily. Homotetramer. Zn(2+) serves as cofactor.

The protein localises to the cytoplasm. The enzyme catalyses 2 D-sedoheptulose 7-phosphate = D-glycero-alpha-D-manno-heptose 7-phosphate + D-glycero-beta-D-manno-heptose 7-phosphate. It participates in carbohydrate biosynthesis; D-glycero-D-manno-heptose 7-phosphate biosynthesis; D-glycero-alpha-D-manno-heptose 7-phosphate and D-glycero-beta-D-manno-heptose 7-phosphate from sedoheptulose 7-phosphate: step 1/1. Catalyzes the isomerization of sedoheptulose 7-phosphate in D-glycero-D-manno-heptose 7-phosphate. The polypeptide is Phosphoheptose isomerase (Pseudomonas syringae pv. syringae (strain B728a)).